The following is a 196-amino-acid chain: Large ribosomal subunit protein uL18 (196 aa).

It belongs to the universal ribosomal protein uL18 family. In terms of assembly, part of the 50S ribosomal subunit. Contacts the 5S and 23S rRNAs.

In terms of biological role, this is one of the proteins that bind and probably mediate the attachment of the 5S RNA into the large ribosomal subunit, where it forms part of the central protuberance. This chain is Large ribosomal subunit protein uL18, found in Saccharolobus islandicus (strain Y.N.15.51 / Yellowstone #2) (Sulfolobus islandicus).